The sequence spans 86 residues: Conotoxin S6.10 (86 aa).

Residues 1-22 (MKLTCVLIIAVLFLTACQLATA) form the signal peptide. Residues 23 to 45 (KTYSKGRQKHRALRSTDKNIKLT) constitute a propeptide that is removed on maturation. Cystine bridges form between Cys-48–Cys-62, Cys-55–Cys-66, and Cys-61–Cys-73.

This sequence belongs to the conotoxin O1 superfamily. As to expression, expressed by the venom duct.

Its subcellular location is the secreted. The polypeptide is Conotoxin S6.10 (Conus striatus (Striated cone)).